The following is a 31-amino-acid chain: Chassatide C6 (31 aa).

The segment at residues glycine 1 to asparagine 31 is a cross-link (cyclopeptide (Gly-Asn)). Intrachain disulfides connect cysteine 5/cysteine 21, cysteine 9/cysteine 23, and cysteine 14/cysteine 28.

In terms of processing, this is a cyclic peptide. Expressed in fruit, pedicel, root and stem but not in leaf (at protein level).

Its function is as follows. Probably participates in a plant defense mechanism. The protein is Chassatide C6 of Chassalia chartacea (Chassalia curviflora).